The primary structure comprises 319 residues: Phosphoenolpyruvate transferase (319 aa).

Position 50 (Asp-50) interacts with 7,8-didemethyl-8-hydroxy-5-deazariboflavin.

It belongs to the CofD family. In terms of assembly, homodimer. It depends on Mg(2+) as a cofactor.

The enzyme catalyses enolpyruvoyl-2-diphospho-5'-guanosine + 7,8-didemethyl-8-hydroxy-5-deazariboflavin = dehydro coenzyme F420-0 + GMP + H(+). The protein operates within cofactor biosynthesis; coenzyme F420 biosynthesis. In terms of biological role, catalyzes the transfer of the phosphoenolpyruvate moiety from enoylpyruvoyl-2-diphospho-5'-guanosine (EPPG) to 7,8-didemethyl-8-hydroxy-5-deazariboflavin (FO) with the formation of dehydro coenzyme F420-0 and GMP. In Streptomyces coelicolor (strain ATCC BAA-471 / A3(2) / M145), this protein is Phosphoenolpyruvate transferase.